The primary structure comprises 296 residues: Factor associated with metabolism and energy (296 aa).

The N-myristoyl glycine moiety is linked to residue Gly2. Basic and acidic residues-rich tracts occupy residues 173 to 187 (SLHG…SPRD) and 267 to 281 (EQGK…LVRT). Disordered regions lie at residues 173–204 (SLHG…DDHD) and 256–281 (LLWD…LVRT).

It localises to the cell membrane. The protein resides in the cytoplasmic vesicle. Its function is as follows. May be involved in tuning the metabolism, energy expenditure, and excretion processes. In Homo sapiens (Human), this protein is Factor associated with metabolism and energy.